The chain runs to 61 residues: uncharacterized protein (61 aa).

The segment at 1–40 (MRRGGEPQCDGREFRIASSPAREREDDNETAPPQTSAAQE) is disordered. Residues 9 to 25 (CDGREFRIASSPARERE) are compositionally biased toward basic and acidic residues.

This is an uncharacterized protein from Caenorhabditis elegans.